A 255-amino-acid chain; its full sequence is Ribonuclease PH (255 aa).

Residues R86 and 124–126 (GTR) contribute to the phosphate site.

Belongs to the RNase PH family. As to quaternary structure, homohexameric ring arranged as a trimer of dimers.

The catalysed reaction is tRNA(n+1) + phosphate = tRNA(n) + a ribonucleoside 5'-diphosphate. Phosphorolytic 3'-5' exoribonuclease that plays an important role in tRNA 3'-end maturation. Removes nucleotide residues following the 3'-CCA terminus of tRNAs; can also add nucleotides to the ends of RNA molecules by using nucleoside diphosphates as substrates, but this may not be physiologically important. Probably plays a role in initiation of 16S rRNA degradation (leading to ribosome degradation) during starvation. This Geobacillus thermodenitrificans (strain NG80-2) protein is Ribonuclease PH.